A 743-amino-acid chain; its full sequence is Apo-petrobactin exporter (743 aa).

12 helical membrane-spanning segments follow: residues 20-40, 199-219, 223-243, 258-278, 303-323, 337-357, 406-426, 561-581, 584-604, 613-633, 672-692, and 694-714; these read WITL…LPQV, ADVK…ILLY, ILAI…SPTL, AISI…LFLI, GGAI…LLLA, VAVF…LLIF, WTII…VPRI, DEAV…LVYL, IVAM…ALGA, MGAP…LVAL, AGLI…QVLV, and FGIV…PLLV.

Belongs to the resistance-nodulation-cell division (RND) (TC 2.A.6) family. MmpL subfamily.

Its subcellular location is the cell membrane. Exports the siderophore petrobactin. This chain is Apo-petrobactin exporter, found in Bacillus anthracis.